A 250-amino-acid polypeptide reads, in one-letter code: Cytochrome c oxidase subunit 2 (250 aa).

Topologically, residues 1–27 are mitochondrial intermembrane; the sequence is MGLLFNNLIMNFDAPSPWGIYFQDSAT. A helical membrane pass occupies residues 28 to 61; the sequence is PQMEGLVELHDNIMYYLVVILFGVGWILLSIIRN. Over 62 to 77 the chain is Mitochondrial matrix; that stretch reads YISTKSPISHKYLNHG. Residues 78-107 form a helical membrane-spanning segment; that stretch reads TLIELIWTITPAVILILIAFPSFKLLYLMD. Residues 108–250 lie on the Mitochondrial intermembrane side of the membrane; it reads EVSDPSMSVL…EKFLTWLEEQ (143 aa). Residues histidine 185, cysteine 220, glutamate 222, cysteine 224, histidine 228, and methionine 231 each coordinate Cu cation. Mg(2+) is bound at residue glutamate 222.

This sequence belongs to the cytochrome c oxidase subunit 2 family. Component of the cytochrome c oxidase (complex IV, CIV), a multisubunit enzyme composed of 11 subunits. The complex is composed of a catalytic core of 3 subunits Cox1, Cox2 and Cox3, encoded in the mitochondrial DNA, and 8 supernumerary subunits Cox4, Cox5a/Cox5, Cox6, Cox7, Cox8, Cox7a/Cox9, Cox6b/Cox12 and Cox6a/Cox13, which are encoded in the nuclear genome. The complex exists as a monomer or a dimer and forms respiratory supercomplexes (SCs) in the inner mitochondrial membrane with NADH-ubiquinone oxidoreductase (complex I, CI) and ubiquinol-cytochrome c oxidoreductase (cytochrome b-c1 complex, complex III, CIII), resulting in various different assemblies (supercomplexes I(1)IV(1), I(1)III(3)IV(2), III(2)IV(1) and III(2)IV(2) as well as larger supercomplexes of compositions like I(1)III(2)IV(5-6)). The cofactor is Cu cation.

The protein localises to the mitochondrion inner membrane. It catalyses the reaction 4 Fe(II)-[cytochrome c] + O2 + 8 H(+)(in) = 4 Fe(III)-[cytochrome c] + 2 H2O + 4 H(+)(out). Component of the cytochrome c oxidase, the last enzyme in the mitochondrial electron transport chain which drives oxidative phosphorylation. The respiratory chain contains 3 multisubunit complexes succinate dehydrogenase (complex II, CII), ubiquinol-cytochrome c oxidoreductase (cytochrome b-c1 complex, complex III, CIII) and cytochrome c oxidase (complex IV, CIV), that cooperate to transfer electrons derived from NADH and succinate to molecular oxygen, creating an electrochemical gradient over the inner membrane that drives transmembrane transport and the ATP synthase. Cytochrome c oxidase is the component of the respiratory chain that catalyzes the reduction of oxygen to water. Electrons originating from reduced cytochrome c in the intermembrane space (IMS) are transferred via the dinuclear copper A center (CU(A)) of Cox2 and heme A of Cox1 to the active site in Cox1, a binuclear center (BNC) formed by heme A3 and copper B (CU(B)). The BNC reduces molecular oxygen to 2 water molecules using 4 electrons from cytochrome c in the IMS and 4 protons from the mitochondrial matrix. This Neurospora crassa (strain ATCC 24698 / 74-OR23-1A / CBS 708.71 / DSM 1257 / FGSC 987) protein is Cytochrome c oxidase subunit 2 (cox-2).